The sequence spans 1042 residues: Sarcoplasmic/endoplasmic reticulum calcium ATPase 2 (1042 aa).

Topologically, residues M1–T48 are cytoplasmic. S38 carries the phosphoserine modification. Residues L49–A69 traverse the membrane as a helical segment. At C70–V89 the chain is on the lumenal side. The chain crosses the membrane as a helical span at residues E90–R110. Over N111–L253 the chain is Cytoplasmic. A helical membrane pass occupies residues D254–I273. The Lumenal portion of the chain corresponds to I274–Y295. 3'-nitrotyrosine is present on residues Y294 and Y295. A helical membrane pass occupies residues F296–A313. Positions 304, 305, 307, and 309 each coordinate Ca(2+). The Cytoplasmic portion of the chain corresponds to V314–M756. The active-site 4-aspartylphosphate intermediate is the D351. Positions 351 and 353 each coordinate Mg(2+). T353 lines the ATP pocket. T441 bears the Phosphothreonine mark. Residues E442, R489, and K514 each coordinate ATP. S531 is subject to Phosphoserine. An ATP-binding site is contributed by R559. The interval M575 to G594 is interaction with HAX1. The residue at position 580 (S580) is a Phosphoserine. Residues T624, G625, and D626 each contribute to the ATP site. Residue S663 is modified to Phosphoserine. ATP contacts are provided by R677 and K683. D702 contacts Mg(2+). N705 is an ATP binding site. Residues K757–L776 traverse the membrane as a helical segment. 2 residues coordinate Ca(2+): N767 and E770. The Lumenal segment spans residues T777–L786. The helical transmembrane segment at I787–G807 threads the bilayer. The tract at residues I787–G807 is interaction with PLN. Positions P788–S1042 are interaction with TMEM64 and PDIA3. The Ca(2+) site is built by N795, T798, and D799. Over F808–L827 the chain is Cytoplasmic. The helical transmembrane segment at I828–A850 threads the bilayer. At A851–M896 the chain is on the lumenal side. A disulfide bond links C875 and C887. The chain crosses the membrane as a helical span at residues T897 to S916. E907 contacts Ca(2+). Residues E917–N929 lie on the Cytoplasmic side of the membrane. Residues I930–Y948 form a helical membrane-spanning segment. The tract at residues W931–L942 is interaction with PLN. Over V949–L963 the chain is Lumenal. Residues T964–K984 form a helical membrane-spanning segment. Residues F985–S1042 are Cytoplasmic-facing.

This sequence belongs to the cation transport ATPase (P-type) (TC 3.A.3) family. Type IIA subfamily. In terms of assembly, interacts with sarcolipin (SLN); the interaction inhibits ATP2A2 Ca(2+) affinity. Interacts with phospholamban (PLN); the interaction inhibits ATP2A2 Ca(2+) affinity. Interacts with myoregulin (MRLN). Interacts with ARLN and ERLN; the interactions inhibit ATP2A2 Ca(2+) affinity. Interacts with STRIT1/DWORF; the interaction results in activation of ATP2A2. Interacts with the monomeric forms of SLN, PLN, ARLN, ERLN and STRI1/DWORF. Interacts with HAX1. Interacts with S100A8 and S100A9. Interacts with SLC35G1 and STIM1. Interacts with TMEM203. Interacts with TMEM64 and PDIA3. Interacts with TMX1. Interacts with TMX2. Interacts with VMP1; VMP1 competes with PLN and SLN to prevent them from forming an inhibitory complex with ATP2A2. Interacts with ULK1. Interacts with S100A1 in a Ca(2+)-dependent manner. Interacts with TUNAR. Interacts with FLVCR2; this interaction occurs in the absence of heme and promotes ATP2A2 proteasomal degradation; this complex is dissociated upon heme binding. Interacts with FNIP1. Interacts with TRAM2 (via C-terminus). The cofactor is Mg(2+). Nitrated under oxidative stress. Nitration on the two tyrosine residues inhibits catalytic activity. Post-translationally, serotonylated on Gln residues by TGM2 in response to hypoxia, leading to its inactivation. As to expression, detected in heart left ventricle (at protein level). Isoform 2 is highly expressed in heart and slow twitch skeletal muscle. Isoform 1 is widely expressed.

The protein localises to the endoplasmic reticulum membrane. The protein resides in the sarcoplasmic reticulum membrane. It catalyses the reaction Ca(2+)(in) + ATP + H2O = Ca(2+)(out) + ADP + phosphate + H(+). Has different conformational states with differential Ca2+ affinity. The E1 conformational state (active form) shows high Ca(2+) affinity, while the E2 state exhibits low Ca(2+) affinity. Binding of ATP allosterically increases its affinity for subsequent binding of Ca2+. Reversibly inhibited by phospholamban (PLN) at low calcium concentrations. PLN inhibits ATP2A2 Ca(2+) affinity by disrupting its allosteric activation by ATP. Inhibited by sarcolipin (SLN) and myoregulin (MRLN). The inhibition is blocked by VMP1. Enhanced by STRIT1/DWORF; STRIT1 increases activity by displacing sarcolipin (SLN), phospholamban (PLN) and myoregulin (MRLN). Stabilizes SERCA2 in its E2 state. Its function is as follows. This magnesium-dependent enzyme catalyzes the hydrolysis of ATP coupled with the translocation of calcium from the cytosol to the sarcoplasmic reticulum lumen. Involved in autophagy in response to starvation. Upon interaction with VMP1 and activation, controls ER-isolation membrane contacts for autophagosome formation. Also modulates ER contacts with lipid droplets, mitochondria and endosomes. In coordination with FLVCR2 mediates heme-stimulated switching from mitochondrial ATP synthesis to thermogenesis. Functionally, involved in the regulation of the contraction/relaxation cycle. Acts as a regulator of TNFSF11-mediated Ca(2+) signaling pathways via its interaction with TMEM64 which is critical for the TNFSF11-induced CREB1 activation and mitochondrial ROS generation necessary for proper osteoclast generation. Association between TMEM64 and SERCA2 in the ER leads to cytosolic Ca(2+) spiking for activation of NFATC1 and production of mitochondrial ROS, thereby triggering Ca(2+) signaling cascades that promote osteoclast differentiation and activation. The protein is Sarcoplasmic/endoplasmic reticulum calcium ATPase 2 (ATP2A2) of Sus scrofa (Pig).